The chain runs to 182 residues: MALSREEIASRYSKALFAYAQDAKKLDEVHEDMNVLLQVAKENPDMLRLLSDPIIRKNQKEEFLSSFSGEFSSETKNFLEFLLEYGRFNALTEIIKAFDALYDEDKNIASGTAVSAINLDEDELNRISQAYAKKYGFKKLILTNEVDSSILGGIILKVGDRIIDGSIRTRLQQIREQLIENR.

It belongs to the ATPase delta chain family. In terms of assembly, F-type ATPases have 2 components, F(1) - the catalytic core - and F(0) - the membrane proton channel. F(1) has five subunits: alpha(3), beta(3), gamma(1), delta(1), epsilon(1). F(0) has three main subunits: a(1), b(2) and c(10-14). The alpha and beta chains form an alternating ring which encloses part of the gamma chain. F(1) is attached to F(0) by a central stalk formed by the gamma and epsilon chains, while a peripheral stalk is formed by the delta and b chains.

It is found in the cell membrane. F(1)F(0) ATP synthase produces ATP from ADP in the presence of a proton or sodium gradient. F-type ATPases consist of two structural domains, F(1) containing the extramembraneous catalytic core and F(0) containing the membrane proton channel, linked together by a central stalk and a peripheral stalk. During catalysis, ATP synthesis in the catalytic domain of F(1) is coupled via a rotary mechanism of the central stalk subunits to proton translocation. Functionally, this protein is part of the stalk that links CF(0) to CF(1). It either transmits conformational changes from CF(0) to CF(1) or is implicated in proton conduction. The sequence is that of ATP synthase subunit delta from Lactobacillus gasseri (strain ATCC 33323 / DSM 20243 / BCRC 14619 / CIP 102991 / JCM 1131 / KCTC 3163 / NCIMB 11718 / NCTC 13722 / AM63).